The primary structure comprises 265 residues: Glutamate racemase (265 aa).

Substrate contacts are provided by residues 9–10 and 41–42; these read DS and YS. Catalysis depends on cysteine 73, which acts as the Proton donor/acceptor. Residue 74 to 75 coordinates substrate; that stretch reads NT. Cysteine 184 serves as the catalytic Proton donor/acceptor. 185-186 lines the substrate pocket; sequence TH.

This sequence belongs to the aspartate/glutamate racemases family.

It carries out the reaction L-glutamate = D-glutamate. The protein operates within cell wall biogenesis; peptidoglycan biosynthesis. In terms of biological role, provides the (R)-glutamate required for cell wall biosynthesis. The chain is Glutamate racemase from Actinobacillus pleuropneumoniae serotype 3 (strain JL03).